Here is a 77-residue protein sequence, read N- to C-terminus: RNA-binding protein Hfq (77 aa).

The Sm domain occupies aspartate 9–isoleucine 68.

The protein belongs to the Hfq family. Homohexamer.

Its function is as follows. RNA chaperone that binds small regulatory RNA (sRNAs) and mRNAs to facilitate mRNA translational regulation in response to envelope stress, environmental stress and changes in metabolite concentrations. Also binds with high specificity to tRNAs. The polypeptide is RNA-binding protein Hfq (Psychromonas ingrahamii (strain DSM 17664 / CCUG 51855 / 37)).